Here is a 201-residue protein sequence, read N- to C-terminus: Small ribosomal subunit protein uS4 (201 aa).

In terms of domain architecture, S4 RNA-binding spans 91 to 157; that stretch reads SRLDNVIYRA…VPFQIARETA (67 aa).

Belongs to the universal ribosomal protein uS4 family. As to quaternary structure, part of the 30S ribosomal subunit. Contacts protein S5. The interaction surface between S4 and S5 is involved in control of translational fidelity.

In terms of biological role, one of the primary rRNA binding proteins, it binds directly to 16S rRNA where it nucleates assembly of the body of the 30S subunit. With S5 and S12 plays an important role in translational accuracy. This chain is Small ribosomal subunit protein uS4, found in Mycobacterium tuberculosis (strain ATCC 25177 / H37Ra).